The chain runs to 451 residues: uncharacterized protein (451 aa).

A disordered region spans residues 415-435 (AHGDTEWLPPPHLDHGQPRVN).

This sequence belongs to the Rv1128c/1148c/1588c/1702c/1945/3466 family.

This is an uncharacterized protein from Mycobacterium tuberculosis (strain ATCC 25618 / H37Rv).